The sequence spans 480 residues: Type II methyltransferase M.NspV (480 aa).

The protein belongs to the methyltransferase superfamily.

A gamma subtype methylase that recognizes the double-stranded sequence 5'-TTCGAA-3', and methylates it on an unknown base to protect it against the NspV endonuclease. The protein is Type II methyltransferase M.NspV of Nostoc sp. (strain ATCC 29411 / PCC 7524).